The following is a 467-amino-acid chain: ATP synthase subunit beta 1 (467 aa).

150 to 157 provides a ligand contact to ATP; sequence GGAGVGKT.

It belongs to the ATPase alpha/beta chains family. As to quaternary structure, F-type ATPases have 2 components, CF(1) - the catalytic core - and CF(0) - the membrane proton channel. CF(1) has five subunits: alpha(3), beta(3), gamma(1), delta(1), epsilon(1). CF(0) has three main subunits: a(1), b(2) and c(9-12). The alpha and beta chains form an alternating ring which encloses part of the gamma chain. CF(1) is attached to CF(0) by a central stalk formed by the gamma and epsilon chains, while a peripheral stalk is formed by the delta and b chains.

Its subcellular location is the cell inner membrane. It carries out the reaction ATP + H2O + 4 H(+)(in) = ADP + phosphate + 5 H(+)(out). Produces ATP from ADP in the presence of a proton gradient across the membrane. The catalytic sites are hosted primarily by the beta subunits. This Vibrio campbellii (strain ATCC BAA-1116) protein is ATP synthase subunit beta 1.